The primary structure comprises 306 residues: N-acetylmuramic acid 6-phosphate etherase (306 aa).

One can recognise an SIS domain in the interval 59–222 (ISEALRQGGR…STGAMVQLGK (164 aa)). E87 (proton donor) is an active-site residue. The active site involves E118.

It belongs to the GCKR-like family. MurNAc-6-P etherase subfamily. Homodimer.

The enzyme catalyses N-acetyl-D-muramate 6-phosphate + H2O = N-acetyl-D-glucosamine 6-phosphate + (R)-lactate. Its pathway is amino-sugar metabolism; N-acetylmuramate degradation. Its function is as follows. Specifically catalyzes the cleavage of the D-lactyl ether substituent of MurNAc 6-phosphate, producing GlcNAc 6-phosphate and D-lactate. The protein is N-acetylmuramic acid 6-phosphate etherase of Gloeothece citriformis (strain PCC 7424) (Cyanothece sp. (strain PCC 7424)).